A 200-amino-acid polypeptide reads, in one-letter code: Rho GDP-dissociation inhibitor 2 (200 aa).

Residues 1–40 (MTEKAPEPHVEEDDDELDGKLNYKPPPQKSLKELQEMDKD) form a disordered region. Thr-2 is subject to N-acetylthreonine. Lys-20 carries the post-translational modification N6-acetyllysine. Tyr-23 carries the phosphotyrosine modification. N6-acetyllysine is present on residues Lys-24, Lys-39, Lys-46, Lys-101, and Lys-123. The segment covering 30–40 (SLKELQEMDKD) has biased composition (basic and acidic residues). Residue Ser-144 is modified to Phosphoserine. An N6-acetyllysine modification is found at Lys-174.

Belongs to the Rho GDI family. Interacts with RHOA. Interacts with RAC1. Interacts with RAC2. Interacts with CDC42.

The protein localises to the cytoplasm. It localises to the cytosol. Functionally, regulates the GDP/GTP exchange reaction of the Rho proteins by inhibiting the dissociation of GDP from them, and the subsequent binding of GTP to them. Regulates reorganization of the actin cytoskeleton mediated by Rho family members. The polypeptide is Rho GDP-dissociation inhibitor 2 (ARHGDIB) (Bos taurus (Bovine)).